We begin with the raw amino-acid sequence, 149 residues long: Deoxyuridine 5'-triphosphate nucleotidohydrolase (149 aa).

Residues 68–70 (RSG), asparagine 81, 85–87 (LID), and methionine 95 each bind substrate.

This sequence belongs to the dUTPase family. It depends on Mg(2+) as a cofactor.

The catalysed reaction is dUTP + H2O = dUMP + diphosphate + H(+). It participates in pyrimidine metabolism; dUMP biosynthesis; dUMP from dCTP (dUTP route): step 2/2. In terms of biological role, this enzyme is involved in nucleotide metabolism: it produces dUMP, the immediate precursor of thymidine nucleotides and it decreases the intracellular concentration of dUTP so that uracil cannot be incorporated into DNA. The chain is Deoxyuridine 5'-triphosphate nucleotidohydrolase from Janthinobacterium sp. (strain Marseille) (Minibacterium massiliensis).